The chain runs to 181 residues: Adenine phosphoribosyltransferase (181 aa).

This sequence belongs to the purine/pyrimidine phosphoribosyltransferase family. In terms of assembly, homodimer.

It localises to the cytoplasm. The enzyme catalyses AMP + diphosphate = 5-phospho-alpha-D-ribose 1-diphosphate + adenine. Its pathway is purine metabolism; AMP biosynthesis via salvage pathway; AMP from adenine: step 1/1. Catalyzes a salvage reaction resulting in the formation of AMP, that is energically less costly than de novo synthesis. The chain is Adenine phosphoribosyltransferase from Vibrio cholerae serotype O1 (strain ATCC 39541 / Classical Ogawa 395 / O395).